A 342-amino-acid polypeptide reads, in one-letter code: MATH domain and coiled-coil domain-containing protein At3g44800 (342 aa).

In terms of domain architecture, MATH spans 3–129; it reads YEKFTWVIKN…NNEVKIVAEV (127 aa). Positions 253-327 form a coiled coil; sequence KVDWLERKLE…ALLEKEKGKV (75 aa).

This is MATH domain and coiled-coil domain-containing protein At3g44800 from Arabidopsis thaliana (Mouse-ear cress).